The sequence spans 296 residues: Ribose import binding protein RbsB (296 aa).

The N-terminal stretch at 1–25 (MNMKKLATLVSAVALSATVSANAMA) is a signal peptide.

Belongs to the bacterial solute-binding protein 2 family. The complex is composed of an ATP-binding protein (RbsA), two transmembrane proteins (RbsC) and a solute-binding protein (RbsB).

Its subcellular location is the periplasm. Part of the ABC transporter complex RbsABC involved in ribose import. Binds ribose. The protein is Ribose import binding protein RbsB (rbsB) of Salmonella typhi.